Consider the following 165-residue polypeptide: Phosphopantetheine adenylyltransferase (165 aa).

Thr9 contributes to the substrate binding site. ATP-binding positions include 9–10 (TF) and His17. Residues Lys41, Leu73, and Arg87 each coordinate substrate. ATP contacts are provided by residues 88–90 (GLR), Glu98, and 123–129 (YQFISGT).

It belongs to the bacterial CoaD family. As to quaternary structure, homohexamer. Mg(2+) serves as cofactor.

The protein localises to the cytoplasm. It carries out the reaction (R)-4'-phosphopantetheine + ATP + H(+) = 3'-dephospho-CoA + diphosphate. Its pathway is cofactor biosynthesis; coenzyme A biosynthesis; CoA from (R)-pantothenate: step 4/5. Functionally, reversibly transfers an adenylyl group from ATP to 4'-phosphopantetheine, yielding dephospho-CoA (dPCoA) and pyrophosphate. The protein is Phosphopantetheine adenylyltransferase of Polynucleobacter necessarius subsp. necessarius (strain STIR1).